The chain runs to 291 residues: Bifunctional protein FolD (291 aa).

NADP(+) contacts are provided by residues 173-175 and Ser-198; that span reads GRS.

It belongs to the tetrahydrofolate dehydrogenase/cyclohydrolase family. Homodimer.

The enzyme catalyses (6R)-5,10-methylene-5,6,7,8-tetrahydrofolate + NADP(+) = (6R)-5,10-methenyltetrahydrofolate + NADPH. It carries out the reaction (6R)-5,10-methenyltetrahydrofolate + H2O = (6R)-10-formyltetrahydrofolate + H(+). The protein operates within one-carbon metabolism; tetrahydrofolate interconversion. In terms of biological role, catalyzes the oxidation of 5,10-methylenetetrahydrofolate to 5,10-methenyltetrahydrofolate and then the hydrolysis of 5,10-methenyltetrahydrofolate to 10-formyltetrahydrofolate. This is Bifunctional protein FolD from Psychrobacter sp. (strain PRwf-1).